The chain runs to 594 residues: CDPK-related kinase 4 (594 aa).

Residues 1-131 (MGHCYSRNIS…DSGGGERLDK (131 aa)) are disordered. Glycine 2 is lipidated: N-myristoyl glycine. Over residues 37-58 (IPQSPVASGTPEVNSYNISPFQ) the composition is skewed to polar residues. Residues 116 to 131 (VVDHGGDSGGGERLDK) are compositionally biased toward basic and acidic residues. Residues 143-405 (YELGKEVGRG…AAQALAHPWL (263 aa)) form the Protein kinase domain. ATP-binding positions include 149–157 (VGRGHFGHT) and lysine 175. The Proton acceptor role is filled by aspartate 271. The residue at position 311 (serine 311) is a Phosphoserine. The segment at 409–439 (NPGLLLDFSVYKLVKSYIRASPFRRSALKAL) is autoinhibitory domain. The tract at residues 428–448 (ASPFRRSALKALSKAIPDEEL) is calmodulin binding (CaMBD). EF-hand domains are found at residues 446-481 (EELV…ATDA), 482-517 (MMES…VYQL), 518-557 (EALE…GPSA), and 558-587 (YPLL…VTVR). Residues aspartate 462, lysine 501, glutamate 506, asparagine 539, glutamate 546, serine 567, aspartate 569, and lysine 571 each contribute to the Ca(2+) site. Position 573 is a phosphoserine (serine 573).

The protein belongs to the protein kinase superfamily. Ser/Thr protein kinase family. CDPK subfamily. Binds calmodulin (CaM) in a calcium-dependent manner. Autophosphorylated.

Its subcellular location is the cell membrane. The enzyme catalyses L-seryl-[protein] + ATP = O-phospho-L-seryl-[protein] + ADP + H(+). It catalyses the reaction L-threonyl-[protein] + ATP = O-phospho-L-threonyl-[protein] + ADP + H(+). Activated by calcium and calmodulin. Autophosphorylation may play an important role in the regulation of the kinase activity. May play a role in signal transduction pathways that involve calcium as a second messenger. The polypeptide is CDPK-related kinase 4 (CRK4) (Arabidopsis thaliana (Mouse-ear cress)).